A 157-amino-acid chain; its full sequence is Small ribosomal subunit protein uS7 (157 aa).

It belongs to the universal ribosomal protein uS7 family. Part of the 30S ribosomal subunit. Contacts proteins S9 and S11.

Its function is as follows. One of the primary rRNA binding proteins, it binds directly to 16S rRNA where it nucleates assembly of the head domain of the 30S subunit. Is located at the subunit interface close to the decoding center, probably blocks exit of the E-site tRNA. This Akkermansia muciniphila (strain ATCC BAA-835 / DSM 22959 / JCM 33894 / BCRC 81048 / CCUG 64013 / CIP 107961 / Muc) protein is Small ribosomal subunit protein uS7.